Consider the following 194-residue polypeptide: Ion-translocating oxidoreductase complex subunit B (194 aa).

Residues 1-26 are hydrophobic; sequence MSSILIAVIAISALALVFGLILGFAS. Residues 32–90 form the 4Fe-4S domain; the sequence is ESDPIVDQIDSILPQTQCGQCGYPGCKPYAEAIANGDTINKCPPGGQATIEKLADLMGV. The [4Fe-4S] cluster site is built by cysteine 49, cysteine 52, cysteine 57, cysteine 73, cysteine 114, cysteine 117, cysteine 120, cysteine 124, cysteine 144, cysteine 147, cysteine 150, and cysteine 154. 2 4Fe-4S ferredoxin-type domains span residues 105 to 134 and 135 to 164; these read KIAFIHEDMCIGCTKCIQACPVDAIVGGTK and ALHTVIEAECTGCDLCVAPCPTDCIEMIPV.

It belongs to the 4Fe4S bacterial-type ferredoxin family. RnfB subfamily. The complex is composed of six subunits: RnfA, RnfB, RnfC, RnfD, RnfE and RnfG. [4Fe-4S] cluster is required as a cofactor.

Its subcellular location is the cell inner membrane. In terms of biological role, part of a membrane-bound complex that couples electron transfer with translocation of ions across the membrane. The sequence is that of Ion-translocating oxidoreductase complex subunit B from Aliivibrio salmonicida (strain LFI1238) (Vibrio salmonicida (strain LFI1238)).